The primary structure comprises 210 residues: uncharacterized protein (210 aa).

6 helical membrane-spanning segments follow: residues 9–29 (WVVT…IIAK), 35–55 (LIVN…MAWP), 64–84 (GPAV…VVAV), 91–111 (GLYG…AAMN), 149–169 (IWFS…AVFW), and 190–210 (IGQA…LFPV).

The protein localises to the cell membrane. This is an uncharacterized protein from Mycobacterium bovis (strain ATCC BAA-935 / AF2122/97).